Reading from the N-terminus, the 814-residue chain is Protein kintoun (814 aa).

Positions 234–246 (AANTARSPASPAP) are enriched in low complexity. Disordered stretches follow at residues 234-259 (AANT…EPRC) and 357-490 (ARQE…MGDP). Positions 388 to 404 (AAREESADGTGADHGEK) are enriched in basic and acidic residues. Phosphoserine occurs at positions 444 and 618. The interval 654 to 686 (AGLQGKGKGVREGCPLSEAEAADQSATSPAASD) is disordered. Residues 675–686 (ADQSATSPAASD) show a composition bias toward low complexity.

The protein belongs to the PIH1 family. Kintoun subfamily. As to quaternary structure, interacts with DNAI2 and HSPA1A. Interacts with CFAP300. Interacts with DNAAF4. Interacts with DNAAF6/PIH1D3. In terms of tissue distribution, expressed in nearly all organs of adult, with higher expression in tissues known to have motile cilia and flagella, such as brain and testis.

It is found in the cytoplasm. It localises to the dynein axonemal particle. Its function is as follows. Required for cytoplasmic pre-assembly of axonemal dyneins, thereby playing a central role in motility in cilia and flagella. Involved in pre-assembly of dynein arm complexes in the cytoplasm before intraflagellar transport loads them for the ciliary compartment. The protein is Protein kintoun of Mus musculus (Mouse).